The primary structure comprises 101 residues: Urease subunit beta (101 aa).

This sequence belongs to the urease beta subunit family. As to quaternary structure, heterotrimer of UreA (gamma), UreB (beta) and UreC (alpha) subunits. Three heterotrimers associate to form the active enzyme.

It is found in the cytoplasm. It carries out the reaction urea + 2 H2O + H(+) = hydrogencarbonate + 2 NH4(+). The protein operates within nitrogen metabolism; urea degradation; CO(2) and NH(3) from urea (urease route): step 1/1. The protein is Urease subunit beta of Sinorhizobium fredii (strain NBRC 101917 / NGR234).